Here is a 295-residue protein sequence, read N- to C-terminus: uncharacterized protein (295 aa).

This is an uncharacterized protein from Xanthobacter autotrophicus.